A 305-amino-acid polypeptide reads, in one-letter code: ATP synthase gamma chain (305 aa).

The protein belongs to the ATPase gamma chain family. As to quaternary structure, F-type ATPases have 2 components, CF(1) - the catalytic core - and CF(0) - the membrane proton channel. CF(1) has five subunits: alpha(3), beta(3), gamma(1), delta(1), epsilon(1). CF(0) has three main subunits: a, b and c.

It localises to the cell membrane. In terms of biological role, produces ATP from ADP in the presence of a proton gradient across the membrane. The gamma chain is believed to be important in regulating ATPase activity and the flow of protons through the CF(0) complex. This is ATP synthase gamma chain from Streptomyces griseus subsp. griseus (strain JCM 4626 / CBS 651.72 / NBRC 13350 / KCC S-0626 / ISP 5235).